Reading from the N-terminus, the 245-residue chain is MAETSNDPFLSYVLSSKQLTNLNRLRRKAVTKQLGSSDDNKVSEEFLRYQHTYQREAFEYLQTKHDAHKIMESQYEQYQSSSKTRRYSIDLDSVDAVDTESQTEYPNEEFIDRNEDSEAVMELRKRLLGKGQNKGLGYETTKSVDRQIEDQDTLQQDLIQDMSKLVGSLKQGAVAFQSALDEDKQVLGAAEIGIQVASQGLMDVSGKLRKYDKSKLSYLFYITVFIFMILGLVFTFIIIQLFPAL.

The Cytoplasmic segment spans residues methionine 1–tyrosine 218. Residues leucine 219 to isoleucine 239 form a helical; Anchor for type IV membrane protein membrane-spanning segment. At glutamine 240–leucine 245 the chain is on the lumenal side.

This sequence belongs to the USE1 family. As to quaternary structure, component of a SNARE complex consisting of UFE1, USE1, SEC20 and SEC22 or YKT6.

The protein localises to the endoplasmic reticulum membrane. SNARE required for targeting and fusion of Golgi-derived retrograde transport vesicles with the ER. In Saccharomyces cerevisiae (strain ATCC 204508 / S288c) (Baker's yeast), this protein is Protein transport protein USE1 (USE1).